A 184-amino-acid polypeptide reads, in one-letter code: Nucleoporin-62 C-terminal-like protein (184 aa).

The stretch at 117–151 (RILHGEVNKVKLDQKRLEQELDFILSQQQELEFLL) forms a coiled coil.

It belongs to the nucleoporin NSP1/NUP62 family.

This chain is Nucleoporin-62 C-terminal-like protein (NUP62CL), found in Homo sapiens (Human).